The following is a 142-amino-acid chain: MKTLSAKPAEVTHDWYVVDADGKTLGRLATQIATRLRGKHKPSFTPHVDTGDFIVVINADKITVTGKKAQDKKYYRHSGYPGGIKETNFSKLLAHKPEDVLHKAVKGMLPKGPLGYAMIKKLKLYAGTEHPHEAQQPKALDI.

It belongs to the universal ribosomal protein uL13 family. As to quaternary structure, part of the 50S ribosomal subunit.

Functionally, this protein is one of the early assembly proteins of the 50S ribosomal subunit, although it is not seen to bind rRNA by itself. It is important during the early stages of 50S assembly. The sequence is that of Large ribosomal subunit protein uL13 from Psychrobacter cryohalolentis (strain ATCC BAA-1226 / DSM 17306 / VKM B-2378 / K5).